Here is a 463-residue protein sequence, read N- to C-terminus: Fumarate hydratase class II (463 aa).

Substrate-binding positions include 95-97 (SGT), 126-129 (HPND), 136-138 (SSN), and T184. The active-site Proton donor/acceptor is H185. S315 is an active-site residue. Residues S316 and 321–323 (KIN) each bind substrate.

This sequence belongs to the class-II fumarase/aspartase family. Fumarase subfamily. As to quaternary structure, homotetramer.

Its subcellular location is the cytoplasm. It catalyses the reaction (S)-malate = fumarate + H2O. The protein operates within carbohydrate metabolism; tricarboxylic acid cycle; (S)-malate from fumarate: step 1/1. Functionally, involved in the TCA cycle. Catalyzes the stereospecific interconversion of fumarate to L-malate. The sequence is that of Fumarate hydratase class II from Chlamydia trachomatis serovar D (strain ATCC VR-885 / DSM 19411 / UW-3/Cx).